The chain runs to 258 residues: Hydroxyacylglutathione hydrolase (258 aa).

7 residues coordinate Zn(2+): H52, H54, D56, H57, H109, D126, and H164.

It belongs to the metallo-beta-lactamase superfamily. Glyoxalase II family. In terms of assembly, monomer. Requires Zn(2+) as cofactor.

It carries out the reaction an S-(2-hydroxyacyl)glutathione + H2O = a 2-hydroxy carboxylate + glutathione + H(+). The protein operates within secondary metabolite metabolism; methylglyoxal degradation; (R)-lactate from methylglyoxal: step 2/2. Its function is as follows. Thiolesterase that catalyzes the hydrolysis of S-D-lactoyl-glutathione to form glutathione and D-lactic acid. The polypeptide is Hydroxyacylglutathione hydrolase (Xylella fastidiosa (strain M12)).